We begin with the raw amino-acid sequence, 202 residues long: Small ribosomal subunit protein uS4c (202 aa).

The S4 RNA-binding domain occupies 90–153 (MRLDNVIFRL…KSEAIISKNI (64 aa)).

Belongs to the universal ribosomal protein uS4 family. As to quaternary structure, part of the 30S ribosomal subunit. Contacts protein S5. The interaction surface between S4 and S5 is involved in control of translational fidelity.

The protein localises to the plastid. It localises to the chloroplast. Functionally, one of the primary rRNA binding proteins, it binds directly to 16S rRNA where it nucleates assembly of the body of the 30S subunit. Its function is as follows. With S5 and S12 plays an important role in translational accuracy. This chain is Small ribosomal subunit protein uS4c (rps4), found in Hypopterygium didictyon.